The chain runs to 515 residues: Phenylalanine--tRNA ligase beta subunit (515 aa).

The region spanning 263 to 334 is the B5 domain; sequence HEYVKIYVDE…IVMGYNQMPR (72 aa). Positions 312, 318, 321, and 322 each coordinate Mg(2+).

The protein belongs to the phenylalanyl-tRNA synthetase beta subunit family. Type 2 subfamily. In terms of assembly, tetramer of two alpha and two beta subunits. Mg(2+) is required as a cofactor.

It is found in the cytoplasm. It catalyses the reaction tRNA(Phe) + L-phenylalanine + ATP = L-phenylalanyl-tRNA(Phe) + AMP + diphosphate + H(+). This chain is Phenylalanine--tRNA ligase beta subunit, found in Pyrobaculum aerophilum (strain ATCC 51768 / DSM 7523 / JCM 9630 / CIP 104966 / NBRC 100827 / IM2).